We begin with the raw amino-acid sequence, 180 residues long: Large ribosomal subunit protein uL18m (180 aa).

It belongs to the universal ribosomal protein uL18 family. In terms of assembly, component of the mitochondrial large ribosomal subunit (mt-LSU). Mature mammalian 55S mitochondrial ribosomes consist of a small (28S) and a large (39S) subunit. The 28S small subunit contains a 12S ribosomal RNA (12S mt-rRNA) and 30 different proteins. The 39S large subunit contains a 16S rRNA (16S mt-rRNA), a copy of mitochondrial valine transfer RNA (mt-tRNA(Val)), which plays an integral structural role, and 52 different proteins.

The protein localises to the mitochondrion. Its function is as follows. Together with thiosulfate sulfurtransferase (TST), acts as a mitochondrial import factor for the cytosolic 5S rRNA. The precursor form shows RNA chaperone activity; is able to fold the 5S rRNA into an import-competent conformation that is recognized by rhodanese (TST). Both the cytoplasmic and mitochondrial forms are able to bind to the helix IV-loop D in the gamma domain of the 5S rRNA. This Homo sapiens (Human) protein is Large ribosomal subunit protein uL18m (MRPL18).